Reading from the N-terminus, the 880-residue chain is Alanine--tRNA ligase (880 aa).

The Zn(2+) site is built by His-548, His-552, Cys-651, and His-655.

It belongs to the class-II aminoacyl-tRNA synthetase family. It depends on Zn(2+) as a cofactor.

It is found in the cytoplasm. The catalysed reaction is tRNA(Ala) + L-alanine + ATP = L-alanyl-tRNA(Ala) + AMP + diphosphate. Catalyzes the attachment of alanine to tRNA(Ala) in a two-step reaction: alanine is first activated by ATP to form Ala-AMP and then transferred to the acceptor end of tRNA(Ala). Also edits incorrectly charged Ser-tRNA(Ala) and Gly-tRNA(Ala) via its editing domain. In Tropheryma whipplei (strain TW08/27) (Whipple's bacillus), this protein is Alanine--tRNA ligase.